Here is a 139-residue protein sequence, read N- to C-terminus: Iron-sulfur cluster assembly 1 homolog, mitochondrial (139 aa).

Positions 52, 117, and 119 each coordinate Fe cation.

The protein belongs to the HesB/IscA family.

The protein resides in the mitochondrion. Involved in the assembly of mitochondrial iron-sulfur proteins. Probably involved in the binding of an intermediate of Fe/S cluster assembly. The sequence is that of Iron-sulfur cluster assembly 1 homolog, mitochondrial (isca1) from Dictyostelium discoideum (Social amoeba).